The primary structure comprises 126 residues: Large ribosomal subunit protein bL12 (126 aa).

It belongs to the bacterial ribosomal protein bL12 family. In terms of assembly, homodimer. Part of the ribosomal stalk of the 50S ribosomal subunit. Forms a multimeric L10(L12)X complex, where L10 forms an elongated spine to which 2 to 4 L12 dimers bind in a sequential fashion. Binds GTP-bound translation factors.

Forms part of the ribosomal stalk which helps the ribosome interact with GTP-bound translation factors. Is thus essential for accurate translation. The sequence is that of Large ribosomal subunit protein bL12 from Geotalea daltonii (strain DSM 22248 / JCM 15807 / FRC-32) (Geobacter daltonii).